The primary structure comprises 80 residues: Dolichol-phosphate mannose synthase subunit 2 (80 aa).

2 consecutive transmembrane segments (helical) span residues Leu-10 to Leu-30 and Ile-50 to Met-70.

This sequence belongs to the DPM2 family. Component of the dolichol-phosphate mannose (DPM) synthase complex composed of DPMS1, DPMS2 and DPMS3; in the complex interacts directly with DPMS3. Associates with the GPI-GlcNAc transferase (GPI-GnT) complex.

The protein localises to the endoplasmic reticulum membrane. Its pathway is protein modification; protein glycosylation. Regulates the biosynthesis of dolichol phosphate-mannose. Regulatory subunit of the dolichol-phosphate mannose (DPM) synthase complex; essential for the ER localization and stable expression of DPMS1. The polypeptide is Dolichol-phosphate mannose synthase subunit 2 (Arabidopsis thaliana (Mouse-ear cress)).